Here is a 512-residue protein sequence, read N- to C-terminus: Transactivator/viroplasmin protein (512 aa).

Disordered regions lie at residues 76–123 and 474–512; these read GNER…NPVA and ADSSSTSGEQNNVEKSCPDSPLTNAYDERSDDHKRIPSI. Polar residues predominate over residues 476–487; the sequence is SSSTSGEQNNVE. Basic and acidic residues predominate over residues 499–512; sequence YDERSDDHKRIPSI.

Belongs to the caulimoviridae viroplasmin family.

It is found in the host cytoplasm. Enhances the translation of downstream ORFs on polycistronic mRNAs derived from figwort mosaic virus. The protein is Transactivator/viroplasmin protein of Figwort mosaic virus (strain DxS) (FMV).